The sequence spans 335 residues: Holliday junction branch migration complex subunit RuvB (335 aa).

The large ATPase domain (RuvB-L) stretch occupies residues 4–184 (ADRIISGQAK…FGIVQRLEFY (181 aa)). Residues isoleucine 23, arginine 24, glycine 65, lysine 68, threonine 69, threonine 70, 131–133 (EDY), arginine 174, tyrosine 184, and arginine 221 contribute to the ATP site. Threonine 69 serves as a coordination point for Mg(2+). The small ATPAse domain (RuvB-S) stretch occupies residues 185–255 (SVEDLTSIVA…VAKQALSMLD (71 aa)). Residues 258 to 335 (DAGFDYLDRK…RHFGLQKLSD (78 aa)) are head domain (RuvB-H). DNA is bound by residues arginine 294, arginine 313, and arginine 318.

This sequence belongs to the RuvB family. In terms of assembly, homohexamer. Forms an RuvA(8)-RuvB(12)-Holliday junction (HJ) complex. HJ DNA is sandwiched between 2 RuvA tetramers; dsDNA enters through RuvA and exits via RuvB. An RuvB hexamer assembles on each DNA strand where it exits the tetramer. Each RuvB hexamer is contacted by two RuvA subunits (via domain III) on 2 adjacent RuvB subunits; this complex drives branch migration. In the full resolvosome a probable DNA-RuvA(4)-RuvB(12)-RuvC(2) complex forms which resolves the HJ.

The protein localises to the cytoplasm. The catalysed reaction is ATP + H2O = ADP + phosphate + H(+). Its function is as follows. The RuvA-RuvB-RuvC complex processes Holliday junction (HJ) DNA during genetic recombination and DNA repair, while the RuvA-RuvB complex plays an important role in the rescue of blocked DNA replication forks via replication fork reversal (RFR). RuvA specifically binds to HJ cruciform DNA, conferring on it an open structure. The RuvB hexamer acts as an ATP-dependent pump, pulling dsDNA into and through the RuvAB complex. RuvB forms 2 homohexamers on either side of HJ DNA bound by 1 or 2 RuvA tetramers; 4 subunits per hexamer contact DNA at a time. Coordinated motions by a converter formed by DNA-disengaged RuvB subunits stimulates ATP hydrolysis and nucleotide exchange. Immobilization of the converter enables RuvB to convert the ATP-contained energy into a lever motion, pulling 2 nucleotides of DNA out of the RuvA tetramer per ATP hydrolyzed, thus driving DNA branch migration. The RuvB motors rotate together with the DNA substrate, which together with the progressing nucleotide cycle form the mechanistic basis for DNA recombination by continuous HJ branch migration. Branch migration allows RuvC to scan DNA until it finds its consensus sequence, where it cleaves and resolves cruciform DNA. This chain is Holliday junction branch migration complex subunit RuvB, found in Haemophilus influenzae (strain PittEE).